Here is a 204-residue protein sequence, read N- to C-terminus: MYCLLATPLCLLSLLLPPLSPAAPISPSEPIGQAYSLALYMQKNTSALLQTYLQHQGSPFSDPGFSAPELQLSTLPSAAVSFKTWHAMEDAERLSRAQGAFLALTQHLQLVGDDQSYLNPGSPILLAQLGAARLRAQGLLGNMAAIMTALGLPIPPEEDTLGFVPFGASAFERKCRGYIVTREYGHWTDRAVRDLALLKAKYSA.

Residues 1–22 form the signal peptide; it reads MYCLLATPLCLLSLLLPPLSPA. The N-linked (GlcNAc...) asparagine glycan is linked to Asn-44.

It belongs to the IL-6 superfamily. In terms of assembly, binds to tripartite CNTF receptor complex consisting of CNTF alpha chain, LIFR and IL6ST (in vitro). In terms of tissue distribution, not detected in adult tissues.

Its subcellular location is the secreted. Its function is as follows. Increases the platelet count associated with splenomegaly. May have an important role in neuronal precursor development and maturation. This is Cardiotrophin-2 (Ctf2) from Mus musculus (Mouse).